Here is a 552-residue protein sequence, read N- to C-terminus: Chaperonin GroEL (552 aa).

ATP is bound by residues 30–33 (TLGP), lysine 51, 87–91 (DGTTT), glycine 415, 479–481 (NAA), and aspartate 495.

This sequence belongs to the chaperonin (HSP60) family. As to quaternary structure, forms a cylinder of 14 subunits composed of two heptameric rings stacked back-to-back. Interacts with the co-chaperonin GroES.

Its subcellular location is the cytoplasm. It carries out the reaction ATP + H2O + a folded polypeptide = ADP + phosphate + an unfolded polypeptide.. Its function is as follows. Together with its co-chaperonin GroES, plays an essential role in assisting protein folding. The GroEL-GroES system forms a nano-cage that allows encapsulation of the non-native substrate proteins and provides a physical environment optimized to promote and accelerate protein folding. The sequence is that of Chaperonin GroEL from Stutzerimonas stutzeri (Pseudomonas stutzeri).